Consider the following 178-residue polypeptide: MAGSGRDDPLVVGRIVGDVLDPFVRITNLSVSYGARIVSNGCELKPSMVTQQPRVVVGGNDMRTFYTLVMVDPDAPSPSNPNLREYLHWLVTDIPGTTGATFGQEVMCYESPRPTMGIHRLVFVLFQQLGRQTVYAPGWRQNFSTRNFAELYNLGSPVATVYFNCQREAGSGGRRVYP.

This sequence belongs to the phosphatidylethanolamine-binding protein family. In terms of assembly, interacts with FTIP1. Expressed in leaf vascular tissues. Specifically expressed in the phloem including companion cells.

It is found in the cytoplasm. The protein localises to the nucleus. The protein resides in the endoplasmic reticulum. In terms of biological role, probable mobile flower-promoting signal (florigen) that moves from the leaf to the shoot apical meristem (SAM) and induces flowering. Promotes the transition from vegetative growth to flowering under long day (LD) conditions. Acts upstream of MADS14 and MADS15. May also participate in the promotion of flowering under short day (SD) conditions. The sequence is that of Protein RICE FLOWERING LOCUS T 1 from Oryza sativa subsp. japonica (Rice).